The sequence spans 361 residues: AP2/ERF and B3 domain-containing transcription repressor TEM1 (361 aa).

A disordered region spans residues Met1–Lys73. Over residues Ser9 to Thr27 the composition is skewed to low complexity. Residues Lys71–Lys126 constitute a DNA-binding region (AP2/ERF). The TF-B3 DNA-binding region spans Phe195–Ser306.

The protein belongs to the AP2/ERF transcription factor family. RAV subfamily. As to quaternary structure, interacts with FT. In terms of tissue distribution, expressed in leaves.

The protein resides in the nucleus. Its function is as follows. Transcriptional repressor of flowering time on long day plants. Acts directly on FT expression by binding 5'-CAACA-3' and 5'-CACCTG-3 sequences. Functionally redundant with TEM2. The polypeptide is AP2/ERF and B3 domain-containing transcription repressor TEM1 (TEM1) (Arabidopsis thaliana (Mouse-ear cress)).